The chain runs to 211 residues: ATP phosphoribosyltransferase (211 aa).

It belongs to the ATP phosphoribosyltransferase family. Short subfamily. In terms of assembly, heteromultimer composed of HisG and HisZ subunits.

It localises to the cytoplasm. It carries out the reaction 1-(5-phospho-beta-D-ribosyl)-ATP + diphosphate = 5-phospho-alpha-D-ribose 1-diphosphate + ATP. It functions in the pathway amino-acid biosynthesis; L-histidine biosynthesis; L-histidine from 5-phospho-alpha-D-ribose 1-diphosphate: step 1/9. Its function is as follows. Catalyzes the condensation of ATP and 5-phosphoribose 1-diphosphate to form N'-(5'-phosphoribosyl)-ATP (PR-ATP). Has a crucial role in the pathway because the rate of histidine biosynthesis seems to be controlled primarily by regulation of HisG enzymatic activity. The chain is ATP phosphoribosyltransferase from Bacillus cereus (strain 03BB102).